The primary structure comprises 301 residues: Probable alpha-L-glutamate ligase (301 aa).

The region spanning 104–287 is the ATP-grasp domain; that stretch reads LQLLSRKGVG…VAALVMEFIE (184 aa). ATP is bound by residues K141, 178 to 179, D187, and 211 to 213; these read EY and RSN. Residues D248, E260, and N262 each contribute to the Mg(2+) site. Mn(2+)-binding residues include D248, E260, and N262.

Belongs to the RimK family. It depends on Mg(2+) as a cofactor. Mn(2+) serves as cofactor.

This chain is Probable alpha-L-glutamate ligase, found in Saccharophagus degradans (strain 2-40 / ATCC 43961 / DSM 17024).